We begin with the raw amino-acid sequence, 168 residues long: GTP-dependent dephospho-CoA kinase (168 aa).

GTP-binding residues include aspartate 40, valine 41, valine 42, aspartate 59, and glutamate 112.

Belongs to the GTP-dependent DPCK family.

The catalysed reaction is 3'-dephospho-CoA + GTP = GDP + CoA + H(+). Its pathway is cofactor biosynthesis; coenzyme A biosynthesis. In terms of biological role, catalyzes the GTP-dependent phosphorylation of the 3'-hydroxyl group of dephosphocoenzyme A to form coenzyme A (CoA). This is GTP-dependent dephospho-CoA kinase from Methanoregula boonei (strain DSM 21154 / JCM 14090 / 6A8).